The chain runs to 466 residues: Muscarinic acetylcholine receptor M2 (466 aa).

Topologically, residues 1–25 are extracellular; the sequence is MNNSTYINSSSENVIALESPYKTIE. 3 N-linked (GlcNAc...) asparagine glycosylation sites follow: Asn-2, Asn-3, and Asn-8. A helical transmembrane segment spans residues 26–48; it reads VVFIVLVAGSLSLVTIIGNILVM. The Cytoplasmic portion of the chain corresponds to 49–62; sequence VSIKVNRHLQTVNN. The helical transmembrane segment at 63 to 83 threads the bilayer; it reads YFLFSLACADLIIGIFSMNLY. The Extracellular segment spans residues 84-100; the sequence is TLYTVIGYWPLGPVVCD. An intrachain disulfide couples Cys-99 to Cys-179. A helical transmembrane segment spans residues 101–122; that stretch reads LWLALDYVVSNASVMNLLIISF. Residues 123 to 125 carry the Important for signaling motif; sequence DRY. The Cytoplasmic segment spans residues 123–142; sequence DRYFCVTKPLTYPVKRTTKM. Residues 143–165 form a helical membrane-spanning segment; that stretch reads AGMMIAAAWVLSFILWAPAILFW. At 166–187 the chain is on the extracellular side; it reads QFIVGGRTVPDKDCYIQFFSNP. A helical membrane pass occupies residues 188-212; the sequence is AVTFGTAIAAFYLPVIIMTVLYWQI. Residues 213–387 are Cytoplasmic-facing; that stretch reads SRASKSRIKK…PPSREKKVTR (175 aa). Disordered stretches follow at residues 223-265 and 279-315; these read GKKE…KVQN and QGEE…SASQ. Polar residues-rich tracts occupy residues 228–238 and 246–256; these read AQNQDPVSPSL and PNNNNIPTSSD. Over residues 287-298 the composition is skewed to low complexity; the sequence is NDSTSVSVVPSN. The chain crosses the membrane as a helical span at residues 388–410; the sequence is TILAILLAFIITWTPYNVMVLIN. At 411–418 the chain is on the extracellular side; that stretch reads SFCASCIP. A disulfide bridge links Cys-413 with Cys-416. The chain crosses the membrane as a helical span at residues 419–442; that stretch reads GTVWTIGYWLCYINSTINPACYAL. The Important for signaling motif lies at 436–440; the sequence is NPACY. Topologically, residues 443–466 are cytoplasmic; the sequence is CNATFKKTFKHLLMCHYKNIGATR. Phosphothreonine is present on residues Thr-446, Thr-450, and Thr-465.

It belongs to the G-protein coupled receptor 1 family. Muscarinic acetylcholine receptor subfamily. CHRM2 sub-subfamily.

The protein resides in the cell membrane. The protein localises to the postsynaptic cell membrane. Its function is as follows. The muscarinic acetylcholine receptor mediates various cellular responses, including inhibition of adenylate cyclase, breakdown of phosphoinositides and modulation of potassium channels through the action of G proteins. Primary transducing effect is adenylate cyclase inhibition. Signaling promotes phospholipase C activity, leading to the release of inositol trisphosphate (IP3); this then triggers calcium ion release into the cytosol. In Gallus gallus (Chicken), this protein is Muscarinic acetylcholine receptor M2 (CHRM2).